Reading from the N-terminus, the 256-residue chain is MPVALRVVPCLDVDGGRVVKGVNFLDLRDAGDPVELARRYDADGADEITFLDVSASTQGRATTLEMVSATAEQVFVPLTVGGGVRAVADVEALLRAGADKVGVNTAAIARPELLTEIAQHYGNQVLVLSVDARRCPDGVVTDSGFEVTTHGGRTGTGIDAVEWAAEATSRGAGEVLLNSIDADGTTAGFDVEMIEAVRAVVDTPLVASGGAGTVEDFVAAARAGADAVLAASVFHYGTLTISEVKAALRDAGFEVR.

Catalysis depends on residues D12 and D131.

It belongs to the HisA/HisF family. In terms of assembly, heterodimer of HisH and HisF.

The protein localises to the cytoplasm. The enzyme catalyses 5-[(5-phospho-1-deoxy-D-ribulos-1-ylimino)methylamino]-1-(5-phospho-beta-D-ribosyl)imidazole-4-carboxamide + L-glutamine = D-erythro-1-(imidazol-4-yl)glycerol 3-phosphate + 5-amino-1-(5-phospho-beta-D-ribosyl)imidazole-4-carboxamide + L-glutamate + H(+). It functions in the pathway amino-acid biosynthesis; L-histidine biosynthesis; L-histidine from 5-phospho-alpha-D-ribose 1-diphosphate: step 5/9. Its function is as follows. IGPS catalyzes the conversion of PRFAR and glutamine to IGP, AICAR and glutamate. The HisF subunit catalyzes the cyclization activity that produces IGP and AICAR from PRFAR using the ammonia provided by the HisH subunit. The protein is Imidazole glycerol phosphate synthase subunit HisF of Beutenbergia cavernae (strain ATCC BAA-8 / DSM 12333 / CCUG 43141 / JCM 11478 / NBRC 16432 / NCIMB 13614 / HKI 0122).